Reading from the N-terminus, the 157-residue chain is Cyclic pyranopterin monophosphate synthase (157 aa).

Substrate is bound by residues 74–76 (MCH) and 112–113 (ME). Asp127 is an active-site residue.

Belongs to the MoaC family. As to quaternary structure, homohexamer; trimer of dimers.

The enzyme catalyses (8S)-3',8-cyclo-7,8-dihydroguanosine 5'-triphosphate = cyclic pyranopterin phosphate + diphosphate. Its pathway is cofactor biosynthesis; molybdopterin biosynthesis. Functionally, catalyzes the conversion of (8S)-3',8-cyclo-7,8-dihydroguanosine 5'-triphosphate to cyclic pyranopterin monophosphate (cPMP). The polypeptide is Cyclic pyranopterin monophosphate synthase (Campylobacter lari (strain RM2100 / D67 / ATCC BAA-1060)).